The primary structure comprises 305 residues: tRNA pseudouridine synthase B (305 aa).

Asp-48 (nucleophile) is an active-site residue.

Belongs to the pseudouridine synthase TruB family. Type 1 subfamily.

It carries out the reaction uridine(55) in tRNA = pseudouridine(55) in tRNA. In terms of biological role, responsible for synthesis of pseudouridine from uracil-55 in the psi GC loop of transfer RNAs. This is tRNA pseudouridine synthase B from Actinobacillus pleuropneumoniae serotype 5b (strain L20).